The following is a 475-amino-acid chain: Aminodeoxychorismate synthase component 1 (475 aa).

This sequence belongs to the anthranilate synthase component I family. Monomer. Heterodimer consisting of two non-identical subunits: a glutamine amidotransferase subunit (PabA) and a aminodeoxychorismate synthase subunit (PabB). The cofactor is Mg(2+).

It catalyses the reaction chorismate + L-glutamine = 4-amino-4-deoxychorismate + L-glutamate. Its pathway is cofactor biosynthesis; tetrahydrofolate biosynthesis; 4-aminobenzoate from chorismate: step 1/2. Functionally, part of a heterodimeric complex that catalyzes the two-step biosynthesis of 4-amino-4-deoxychorismate (ADC), a precursor of p-aminobenzoate (PABA) and tetrahydrofolate. In the first step, a glutamine amidotransferase (PabA) generates ammonia as a substrate that, along with chorismate, is used in the second step, catalyzed by aminodeoxychorismate synthase (PabB) to produce ADC. This chain is Aminodeoxychorismate synthase component 1 (pabB), found in Streptomyces lividans.